Reading from the N-terminus, the 342-residue chain is UDP-3-O-acylglucosamine N-acyltransferase (342 aa).

The active-site Proton acceptor is H253.

It belongs to the transferase hexapeptide repeat family. LpxD subfamily. As to quaternary structure, homotrimer.

It carries out the reaction a UDP-3-O-[(3R)-3-hydroxyacyl]-alpha-D-glucosamine + a (3R)-hydroxyacyl-[ACP] = a UDP-2-N,3-O-bis[(3R)-3-hydroxyacyl]-alpha-D-glucosamine + holo-[ACP] + H(+). Its pathway is bacterial outer membrane biogenesis; LPS lipid A biosynthesis. Functionally, catalyzes the N-acylation of UDP-3-O-acylglucosamine using 3-hydroxyacyl-ACP as the acyl donor. Is involved in the biosynthesis of lipid A, a phosphorylated glycolipid that anchors the lipopolysaccharide to the outer membrane of the cell. In Rickettsia canadensis (strain McKiel), this protein is UDP-3-O-acylglucosamine N-acyltransferase.